The chain runs to 101 residues: NADH-quinone oxidoreductase subunit K (101 aa).

The next 3 helical transmembrane spans lie at 4–24, 29–49, and 61–81; these read LAHY…GIFL, IIII…NFVA, and IFVF…LAIL.

This sequence belongs to the complex I subunit 4L family. NDH-1 is composed of 14 different subunits. Subunits NuoA, H, J, K, L, M, N constitute the membrane sector of the complex.

The protein localises to the cell inner membrane. It carries out the reaction a quinone + NADH + 5 H(+)(in) = a quinol + NAD(+) + 4 H(+)(out). NDH-1 shuttles electrons from NADH, via FMN and iron-sulfur (Fe-S) centers, to quinones in the respiratory chain. The immediate electron acceptor for the enzyme in this species is believed to be ubiquinone. Couples the redox reaction to proton translocation (for every two electrons transferred, four hydrogen ions are translocated across the cytoplasmic membrane), and thus conserves the redox energy in a proton gradient. This is NADH-quinone oxidoreductase subunit K from Burkholderia ambifaria (strain MC40-6).